The sequence spans 278 residues: Prohibitin-7, mitochondrial (278 aa).

Residues 1 to 14 (MNVKKVPNVPGSPA) are Mitochondrial matrix-facing. Residues 15 to 37 (LSALLKLGVIGGLGLYCIGSSMY) form a helical; Signal-anchor for type II membrane protein membrane-spanning segment. The Mitochondrial intermembrane segment spans residues 38–278 (NVDGGHRAIV…NSSDLLISKQ (241 aa)). Positions 186–220 (KEFTEAIEKKQVAAQEAERAKFIVEKAEQDKKSAI) form a coiled coil.

It belongs to the prohibitin family. In terms of assembly, component of a prohibitin multimeric complex in mitochondrial membranes.

It localises to the mitochondrion inner membrane. Functionally, prohibitin probably acts as a holdase/unfoldase for the stabilization of newly synthesized mitochondrial proteins. The protein is Prohibitin-7, mitochondrial (PHB7) of Arabidopsis thaliana (Mouse-ear cress).